A 275-amino-acid chain; its full sequence is 4-hydroxy-3-methylbut-2-enyl diphosphate reductase (275 aa).

Cys12 contributes to the [4Fe-4S] cluster binding site. Residues His36 and His70 each contribute to the (2E)-4-hydroxy-3-methylbut-2-enyl diphosphate site. His36 and His70 together coordinate dimethylallyl diphosphate. The isopentenyl diphosphate site is built by His36 and His70. Cys92 provides a ligand contact to [4Fe-4S] cluster. A (2E)-4-hydroxy-3-methylbut-2-enyl diphosphate-binding site is contributed by His120. His120 is a dimethylallyl diphosphate binding site. His120 is a binding site for isopentenyl diphosphate. Glu122 serves as the catalytic Proton donor. Thr158 contributes to the (2E)-4-hydroxy-3-methylbut-2-enyl diphosphate binding site. Residue Cys186 coordinates [4Fe-4S] cluster. 4 residues coordinate (2E)-4-hydroxy-3-methylbut-2-enyl diphosphate: Ser214, Ser215, Asn216, and Ser258. Residues Ser214, Ser215, Asn216, and Ser258 each coordinate dimethylallyl diphosphate. Isopentenyl diphosphate contacts are provided by Ser214, Ser215, Asn216, and Ser258.

It belongs to the IspH family. The cofactor is [4Fe-4S] cluster.

It carries out the reaction isopentenyl diphosphate + 2 oxidized [2Fe-2S]-[ferredoxin] + H2O = (2E)-4-hydroxy-3-methylbut-2-enyl diphosphate + 2 reduced [2Fe-2S]-[ferredoxin] + 2 H(+). The enzyme catalyses dimethylallyl diphosphate + 2 oxidized [2Fe-2S]-[ferredoxin] + H2O = (2E)-4-hydroxy-3-methylbut-2-enyl diphosphate + 2 reduced [2Fe-2S]-[ferredoxin] + 2 H(+). It participates in isoprenoid biosynthesis; dimethylallyl diphosphate biosynthesis; dimethylallyl diphosphate from (2E)-4-hydroxy-3-methylbutenyl diphosphate: step 1/1. It functions in the pathway isoprenoid biosynthesis; isopentenyl diphosphate biosynthesis via DXP pathway; isopentenyl diphosphate from 1-deoxy-D-xylulose 5-phosphate: step 6/6. Its function is as follows. Catalyzes the conversion of 1-hydroxy-2-methyl-2-(E)-butenyl 4-diphosphate (HMBPP) into a mixture of isopentenyl diphosphate (IPP) and dimethylallyl diphosphate (DMAPP). Acts in the terminal step of the DOXP/MEP pathway for isoprenoid precursor biosynthesis. The chain is 4-hydroxy-3-methylbut-2-enyl diphosphate reductase from Sulfurimonas denitrificans (strain ATCC 33889 / DSM 1251) (Thiomicrospira denitrificans (strain ATCC 33889 / DSM 1251)).